The chain runs to 576 residues: Protein O-linked-mannose beta-1,4-N-acetylglucosaminyltransferase 2 (576 aa).

The Cytoplasmic portion of the chain corresponds to 1-4; the sequence is MNIS. Residues 5-25 form a helical; Signal-anchor for type II membrane protein membrane-spanning segment; sequence AVFNALLVSIMAAVLWKHVKL. Residues 26–576 are Lumenal-facing; sequence LEQFYVIEEE…PFAEVLVCNT (551 aa). 6 N-linked (GlcNAc...) asparagine glycosylation sites follow: N98, N275, N335, N451, N539, and N561. Positions 482–576 constitute a Fibronectin type-III domain; the sequence is RESKCQASAQ…PFAEVLVCNT (95 aa).

This sequence belongs to the glycosyltransferase 61 family.

The protein resides in the endoplasmic reticulum membrane. The catalysed reaction is 3-O-(alpha-D-mannosyl)-L-threonyl-[protein] + UDP-N-acetyl-alpha-D-glucosamine = 3-O-(N-acetyl-beta-D-glucosaminyl-(1-&gt;4)-alpha-D-mannosyl)-L-threonyl-[protein] + UDP + H(+). The protein operates within protein modification; protein glycosylation. In terms of biological role, O-linked mannose beta-1,4-N-acetylglucosaminyltransferase that transfers UDP-N-acetyl-D-glucosamine to the 4-position of the mannose to generate N-acetyl-D-glucosamine-beta-1,4-O-D-mannosylprotein. Involved in the biosynthesis of the phosphorylated O-mannosyl trisaccharide (N-acetylgalactosamine-beta-3-N-acetylglucosamine-beta-4-(phosphate-6-)mannose), a carbohydrate structure present in alpha-dystroglycan (DAG1), which is required for binding laminin G-like domain-containing extracellular proteins with high affinity. This chain is Protein O-linked-mannose beta-1,4-N-acetylglucosaminyltransferase 2 (pomgnt2), found in Xenopus tropicalis (Western clawed frog).